A 132-amino-acid chain; its full sequence is uncharacterized protein (132 aa).

The interval arginine 17 to alanine 75 is disordered. A compositionally biased stretch (low complexity) spans alanine 51 to alanine 65.

As to expression, expressed exclusively in heart.

It localises to the cytoplasm. This is an uncharacterized protein from Homo sapiens (Human).